The chain runs to 303 residues: Hemolysin E, chromosomal (303 aa).

Cys-87 and Cys-285 are joined by a disulfide. Residues 183-203 traverse the membrane as a helical segment; it reads AGVVAGPFGLIISYSIAAGVV.

In terms of assembly, monomer and oligomer. In periplasm, it is present as a monomer, while in outer membrane vesicles, it oligomerizes to form a pore structure that is active. The pore is formed by a dodecamer. In terms of processing, in periplasm, it forms a disulfide bond between Cys-87 and Cys-285, which prevents the oligomerization. In outer membrane vesicles, the redox status prevents formation of the disulfide bond, leading to oligomerization and pore formation.

It is found in the secreted. The protein localises to the periplasm. Its subcellular location is the host cell membrane. Its function is as follows. Toxin, which has some hemolytic activity towards mammalian cells. Acts by forming a pore-like structure upon contact with mammalian cells. The chain is Hemolysin E, chromosomal (hlyE) from Escherichia coli (strain K12).